The primary structure comprises 349 residues: Methylthioribose-1-phosphate isomerase (349 aa).

Residues 51-53 (RGA), Arg-94, and Gln-199 contribute to the substrate site. Asp-240 functions as the Proton donor in the catalytic mechanism. Residue 250 to 251 (NK) coordinates substrate.

This sequence belongs to the eIF-2B alpha/beta/delta subunits family. MtnA subfamily. Homodimer.

It catalyses the reaction 5-(methylsulfanyl)-alpha-D-ribose 1-phosphate = 5-(methylsulfanyl)-D-ribulose 1-phosphate. It participates in amino-acid biosynthesis; L-methionine biosynthesis via salvage pathway; L-methionine from S-methyl-5-thio-alpha-D-ribose 1-phosphate: step 1/6. Functionally, catalyzes the interconversion of methylthioribose-1-phosphate (MTR-1-P) into methylthioribulose-1-phosphate (MTRu-1-P). This chain is Methylthioribose-1-phosphate isomerase, found in Bacillus cytotoxicus (strain DSM 22905 / CIP 110041 / 391-98 / NVH 391-98).